The chain runs to 311 residues: Putative mitochondrial transporter UCP3 (311 aa).

Over 1 to 10 (MVGLQPSERP) the chain is Mitochondrial intermembrane. Residues 11–32 (PTTSVKFLAAGTAACFADLLTF) form a helical membrane-spanning segment. Solcar repeat units follow at residues 11–105 (PTTS…VKQF), 114–205 (SSII…IKEK), and 214–299 (DNFP…MKRA). At 33–76 (PLDTAKVRLQIQGENQAALAARSAQYRGVLGTILTMVRTEGPRS) the chain is on the mitochondrial matrix side. The chain crosses the membrane as a helical span at residues 77-99 (LYSGLVAGLQRQMSFASIRIGLY). Residues 100-119 (DSVKQFYTPKGSDHSSIITR) lie on the Mitochondrial intermembrane side of the membrane. A helical transmembrane segment spans residues 120–136 (ILAGCTTGAMAVTCAQP). Topologically, residues 137–182 (TDVVKIRFQASMHTGLGGNRKYSGTMDAYRTIAREEGVRGLWKGIL) are mitochondrial matrix. Residues 183–199 (PNITRNAIVNCGEMVTY) form a helical membrane-spanning segment. The Mitochondrial intermembrane segment spans residues 200-216 (DIIKEKLLDYHLLTDNF). The helical transmembrane segment at 217-236 (PCHFVSAFGAGFCATLVASP) threads the bilayer. Residues 237–270 (VDVVKTRYMNSPPGQYHSPFDCMLKMVTQEGPTA) are Mitochondrial matrix-facing. A helical membrane pass occupies residues 271-293 (FYKGFTPSFLRLGSWNVVMFVTY). A purine nucleotide binding region spans residues 278-300 (SFLRLGSWNVVMFVTYEQMKRAL). Topologically, residues 294-311 (EQMKRALMKVQMLRDSPF) are mitochondrial intermembrane.

The protein belongs to the mitochondrial carrier (TC 2.A.29) family. Interacts with HAX1; the interaction is direct and calcium-dependent.

Its subcellular location is the mitochondrion inner membrane. In terms of biological role, putative transmembrane transporter that plays a role in mitochondrial metabolism via an as yet unclear mechanism. Originally, this mitochondrial protein was thought to act as a proton transmembrane transporter from the mitochondrial intermembrane space into the matrix, causing proton leaks through the inner mitochondrial membrane, thereby uncoupling mitochondrial membrane potential generation from ATP synthesis. However, this function is controversial and uncoupling may not be the function, or at least not the main function, but rather a consequence of more conventional metabolite transporter activity. The polypeptide is Putative mitochondrial transporter UCP3 (Bos taurus (Bovine)).